The primary structure comprises 314 residues: tRNA(Ile)-lysidine synthase, chloroplastic (314 aa).

31-36 (SGGQDS) contacts ATP.

This sequence belongs to the tRNA(Ile)-lysidine synthase family.

The protein localises to the plastid. It is found in the chloroplast. It catalyses the reaction cytidine(34) in tRNA(Ile2) + L-lysine + ATP = lysidine(34) in tRNA(Ile2) + AMP + diphosphate + H(+). Its function is as follows. Ligates lysine onto the cytidine present at position 34 of the AUA codon-specific tRNA(Ile) that contains the anticodon CAU, in an ATP-dependent manner. Cytidine is converted to lysidine, thus changing the amino acid specificity of the tRNA from methionine to isoleucine. This is tRNA(Ile)-lysidine synthase, chloroplastic from Cyanidium caldarium (Red alga).